The following is a 251-amino-acid chain: Ribosomal RNA small subunit methyltransferase J (251 aa).

S-adenosyl-L-methionine is bound by residues 100-101, 116-117, and Asp170; these read RD and ER.

The protein belongs to the methyltransferase superfamily. RsmJ family.

Its subcellular location is the cytoplasm. It catalyses the reaction guanosine(1516) in 16S rRNA + S-adenosyl-L-methionine = N(2)-methylguanosine(1516) in 16S rRNA + S-adenosyl-L-homocysteine + H(+). Functionally, specifically methylates the guanosine in position 1516 of 16S rRNA. In Actinobacillus pleuropneumoniae serotype 3 (strain JL03), this protein is Ribosomal RNA small subunit methyltransferase J.